A 1048-amino-acid polypeptide reads, in one-letter code: Protein argonaute 7 (1048 aa).

Residues 1–14 are compositionally biased toward basic and acidic residues; it reads MEGEREGVVAKNED. 2 disordered regions span residues 1–50 and 121–141; these read MEGE…GSSG and KAADAAPRGSMWKHRPSKKPP. The span at 16–37 shows a compositional bias: gly residues; the sequence is AGGGGGGLGTGGNGGGGGGGSA. Basic residues predominate over residues 131-141; sequence MWKHRPSKKPP. The PAZ domain maps to 422–530; sequence KRCDFLKDLP…VPMELCVVCE (109 aa). The Piwi domain occupies 709-1017; the sequence is LLICVMERRH…AAYRGRLYLE (309 aa).

Belongs to the argonaute family. Ago subfamily. Expressed in the reproductive shoot apex.

Its function is as follows. Involved in the RNA silencing pathway. May bind to short RNAs such as microRNAs (miRNAs) or short interfering RNAs (siRNAs), and represses the translation of mRNAs which are complementary to them. Regulates shoot apical meristem (SAM) initiation and maintenance and leaf polarization through the trans-acting siRNAS (ta-siRNAs) pathway which probably modulates the expression of the ARF2, ARF3, ARF4, ARF14 and ARF15 genes. The sequence is that of Protein argonaute 7 (AGO7) from Oryza sativa subsp. japonica (Rice).